The following is a 750-amino-acid chain: Photosystem I P700 chlorophyll a apoprotein A1 (750 aa).

8 consecutive transmembrane segments (helical) span residues Val-70–Ala-93, Leu-156–His-179, Leu-195–Leu-219, Ile-291–Tyr-309, Trp-346–Tyr-369, Leu-385–Val-411, Ala-433–His-455, and Phe-531–Leu-549. [4Fe-4S] cluster-binding residues include Cys-573 and Cys-582. The next 2 helical transmembrane spans lie at His-589 to Trp-610 and Leu-664 to Phe-686. His-675 is a binding site for chlorophyll a'. The chlorophyll a site is built by Met-683 and Tyr-691. Trp-692 is a binding site for phylloquinone. The helical transmembrane segment at Ala-724–Ala-744 threads the bilayer.

This sequence belongs to the PsaA/PsaB family. In terms of assembly, the PsaA/B heterodimer binds the P700 chlorophyll special pair and subsequent electron acceptors. PSI consists of a core antenna complex that captures photons, and an electron transfer chain that converts photonic excitation into a charge separation. The eukaryotic PSI reaction center is composed of at least 11 subunits. The cofactor is P700 is a chlorophyll a/chlorophyll a' dimer, A0 is one or more chlorophyll a, A1 is one or both phylloquinones and FX is a shared 4Fe-4S iron-sulfur center..

It localises to the plastid. The protein resides in the chloroplast thylakoid membrane. It catalyses the reaction reduced [plastocyanin] + hnu + oxidized [2Fe-2S]-[ferredoxin] = oxidized [plastocyanin] + reduced [2Fe-2S]-[ferredoxin]. Its function is as follows. PsaA and PsaB bind P700, the primary electron donor of photosystem I (PSI), as well as the electron acceptors A0, A1 and FX. PSI is a plastocyanin-ferredoxin oxidoreductase, converting photonic excitation into a charge separation, which transfers an electron from the donor P700 chlorophyll pair to the spectroscopically characterized acceptors A0, A1, FX, FA and FB in turn. Oxidized P700 is reduced on the lumenal side of the thylakoid membrane by plastocyanin. This Arabis hirsuta (Hairy rock-cress) protein is Photosystem I P700 chlorophyll a apoprotein A1.